The chain runs to 540 residues: 2-succinyl-5-enolpyruvyl-6-hydroxy-3-cyclohexene-1-carboxylate synthase (540 aa).

The protein belongs to the TPP enzyme family. MenD subfamily. Homodimer. The cofactor is Mg(2+). Mn(2+) is required as a cofactor. It depends on thiamine diphosphate as a cofactor.

The enzyme catalyses isochorismate + 2-oxoglutarate + H(+) = 5-enolpyruvoyl-6-hydroxy-2-succinyl-cyclohex-3-ene-1-carboxylate + CO2. The protein operates within quinol/quinone metabolism; 1,4-dihydroxy-2-naphthoate biosynthesis; 1,4-dihydroxy-2-naphthoate from chorismate: step 2/7. It participates in quinol/quinone metabolism; menaquinone biosynthesis. Its function is as follows. Catalyzes the thiamine diphosphate-dependent decarboxylation of 2-oxoglutarate and the subsequent addition of the resulting succinic semialdehyde-thiamine pyrophosphate anion to isochorismate to yield 2-succinyl-5-enolpyruvyl-6-hydroxy-3-cyclohexene-1-carboxylate (SEPHCHC). This chain is 2-succinyl-5-enolpyruvyl-6-hydroxy-3-cyclohexene-1-carboxylate synthase, found in Mycobacteroides abscessus (strain ATCC 19977 / DSM 44196 / CCUG 20993 / CIP 104536 / JCM 13569 / NCTC 13031 / TMC 1543 / L948) (Mycobacterium abscessus).